The following is a 113-amino-acid chain: MEDTLSLAEAMEDLVSAEDFLDYFAVPYDPAVVHVNRLHILQRFHDYLAKQAPNLPPEESQQRGIYRLWLERAYQDFVTSDSLTEKVFAVFQTVSKPDGGMSSFVSLDKVFRQ.

Belongs to the NifW family. As to quaternary structure, homotrimer; associates with NifD.

Its function is as follows. May protect the nitrogenase Fe-Mo protein from oxidative damage. The sequence is that of Nitrogenase-stabilizing/protective protein NifW from Dechloromonas aromatica (strain RCB).